Here is a 282-residue protein sequence, read N- to C-terminus: HTH-type transcriptional activator RhaR (282 aa).

In terms of domain architecture, HTH araC/xylS-type spans 179-277; that stretch reads DKLITALANS…GMTPSQWRHL (99 aa). 2 consecutive DNA-binding regions (H-T-H motif) follow at residues 196–217 and 244–267; these read DAFC…RAQT and ISEI…TRET.

In terms of assembly, binds DNA as a dimer.

Its subcellular location is the cytoplasm. In terms of biological role, activates expression of the rhaSR operon in response to L-rhamnose. In Salmonella typhimurium (strain LT2 / SGSC1412 / ATCC 700720), this protein is HTH-type transcriptional activator RhaR.